The primary structure comprises 264 residues: Glutamate racemase (264 aa).

Substrate contacts are provided by residues 10–11 (DS) and 42–43 (YG). Residue C73 is the Proton donor/acceptor of the active site. 74–75 (NT) is a binding site for substrate. C183 (proton donor/acceptor) is an active-site residue. 184–185 (TH) serves as a coordination point for substrate.

This sequence belongs to the aspartate/glutamate racemases family.

The enzyme catalyses L-glutamate = D-glutamate. Its pathway is cell wall biogenesis; peptidoglycan biosynthesis. In terms of biological role, provides the (R)-glutamate required for cell wall biosynthesis. This is Glutamate racemase from Streptococcus agalactiae serotype Ia (strain ATCC 27591 / A909 / CDC SS700).